The chain runs to 227 residues: uncharacterized protein (227 aa).

A run of 2 helical transmembrane segments spans residues 7–24 (FVYA…VTWA) and 135–157 (VVVI…LMCL).

Belongs to the TMEM9 family.

The protein localises to the membrane. This is an uncharacterized protein from Drosophila melanogaster (Fruit fly).